Reading from the N-terminus, the 476-residue chain is Alkaline phosphatase H (476 aa).

The N-terminal stretch at 1–26 is a signal peptide; the sequence is MTPGYPLALSLAVSMAVLGSALPAQA. Mg(2+) is bound at residue aspartate 77. Aspartate 77 lines the Zn(2+) pocket. Serine 128 serves as the catalytic Phosphoserine intermediate. At serine 128 the chain carries Phosphoserine. Mg(2+) is bound by residues aspartate 179 and threonine 181. Serine 206 is subject to Phosphoserine. Glutamine 346 is a Mg(2+) binding site. Zn(2+) contacts are provided by aspartate 353, histidine 357, aspartate 395, histidine 396, and histidine 438.

This sequence belongs to the alkaline phosphatase family. The cofactor is Mg(2+). Zn(2+) is required as a cofactor.

The protein resides in the secreted. It localises to the periplasm. It catalyses the reaction a phosphate monoester + H2O = an alcohol + phosphate. In terms of biological role, has only phosphomonoesterase activity. The polypeptide is Alkaline phosphatase H (phoA) (Pseudomonas aeruginosa (strain UCBPP-PA14)).